The primary structure comprises 169 residues: Peptide deformylase (169 aa).

Residues Cys91 and His133 each contribute to the Fe cation site. Residue Glu134 is part of the active site. His137 provides a ligand contact to Fe cation.

It belongs to the polypeptide deformylase family. Fe(2+) is required as a cofactor.

The catalysed reaction is N-terminal N-formyl-L-methionyl-[peptide] + H2O = N-terminal L-methionyl-[peptide] + formate. Its function is as follows. Removes the formyl group from the N-terminal Met of newly synthesized proteins. Requires at least a dipeptide for an efficient rate of reaction. N-terminal L-methionine is a prerequisite for activity but the enzyme has broad specificity at other positions. The chain is Peptide deformylase from Klebsiella pneumoniae subsp. pneumoniae (strain ATCC 700721 / MGH 78578).